Here is a 322-residue protein sequence, read N- to C-terminus: Follistatin-A (322 aa).

A signal peptide spans 1-32; sequence MLRMLKRQQLHPGMILLLFWLCYLIEDQKVQA. Residues 33 to 106 enclose the TB domain; it reads GNCWLQQGKN…TCDNVDCGPG (74 aa). 8 cysteine pairs are disulfide-bonded: C35/C58, C45/C91, C59/C94, C98/C109, C103/C119, C121/C153, C125/C146, and C135/C167. An N-linked (GlcNAc...) asparagine glycan is attached at N75. One can recognise a Follistatin-like 1 domain in the interval 97-120; the sequence is TCDNVDCGPGKRCKMNRRSKPRCV. Kazal-like domains lie at 103-169, 189-244, and 267-321; these read CGPG…KCKK, NAYC…KCIK, and RGRC…SCNC. N-linked (GlcNAc...) asparagine glycosylation occurs at N127. Residues 170-193 enclose the Follistatin-like 2 domain; sequence TCRDVLCPGSSTCVVDQTNNAYCV. Disulfide bonds link C195–C228, C199–C221, and C210–C242. One can recognise a Follistatin-like 3 domain in the interval 247–271; it reads SCDDIHCSAGKKCLWDAKMSRGRCA. Intrachain disulfides connect C273/C305, C277/C298, and C287/C319. A glycan (N-linked (GlcNAc...) asparagine) is linked at N291.

As to quaternary structure, monomer. As to expression, not expressed in the organizer region. Expression in gastrulating embryos is confined to anterior and paraxial regions, which give rise to head mesoderm and the first five somites. In addition, expressed transiently in a subset of cells in the posterior notochord anlage. Later, expression is seen in brain, eyes and somites.

In terms of biological role, binds directly to activin and functions as an activin antagonist. Specific inhibitor of the biosynthesis and secretion of pituitary follicle stimulating hormone (fsh). Inhibits bmp-signaling during later stages of development including late phases of dorsoventral patterning, to refine the early pattern set up by the interaction of chordino and bmp2/4. Not involved in organizer function or early phases of dorsoventral pattern formation. This Danio rerio (Zebrafish) protein is Follistatin-A (fsta).